A 220-amino-acid polypeptide reads, in one-letter code: Ribonuclease HII (220 aa).

The RNase H type-2 domain maps to cysteine 27 to serine 220. Positions 33, 34, and 128 each coordinate a divalent metal cation.

This sequence belongs to the RNase HII family. It depends on Mn(2+) as a cofactor. Mg(2+) is required as a cofactor.

Its subcellular location is the cytoplasm. It carries out the reaction Endonucleolytic cleavage to 5'-phosphomonoester.. Its function is as follows. Endonuclease that specifically degrades the RNA of RNA-DNA hybrids. The polypeptide is Ribonuclease HII (Ehrlichia ruminantium (strain Gardel)).